The following is a 498-amino-acid chain: L-amino acid oxidase Cdc18 (498 aa).

The N-terminal stretch at 1–2 (SC) is a signal peptide. The cysteines at positions 12 and 173 are disulfide-linked. FAD is bound by residues 45–46 (MA), 65–66 (EA), Arg-73, and 87–90 (GPMR). Residues Arg-90 and His-223 each coordinate substrate. Val-263 lines the FAD pocket. A disulfide bond links Cys-333 and Cys-414. N-linked (GlcNAc...) asparagine glycosylation is present at Asn-363. Tyr-374 is a substrate binding site. FAD is bound by residues Glu-459 and 466–471 (GWIDST). 466–467 (GW) serves as a coordination point for substrate.

It belongs to the flavin monoamine oxidase family. FIG1 subfamily. In terms of assembly, monomer. This is in contrast with most of its orthologs, that are non-covalently linked homodimers. It depends on FAD as a cofactor. As to expression, expressed by the venom gland.

The protein localises to the secreted. It catalyses the reaction an L-alpha-amino acid + O2 + H2O = a 2-oxocarboxylate + H2O2 + NH4(+). The enzyme catalyses L-leucine + O2 + H2O = 4-methyl-2-oxopentanoate + H2O2 + NH4(+). Its function is as follows. Catalyzes an oxidative deamination of predominantly hydrophobic and aromatic L-amino acids, thus producing hydrogen peroxide that may contribute to the diverse toxic effects of this enzyme. Shows activity on L-Leu. Damages cell membranes of the Gram-positive bacteria S.aureus (MIC=8 ug/ml and MBC=16 ug/ml) and the Gram-negative bacteria A.baumannii (MIC=16 ug/ml and MBC=32 ug/ml). This antimicrobial activity is dependent on the production of hydrogen peroxyde, since it is inhibited by catalase, a hydrogen peroxyde scavenger. This Crotalus durissus cumanensis (South American rattlesnake) protein is L-amino acid oxidase Cdc18.